Here is an 88-residue protein sequence, read N- to C-terminus: Stannin (88 aa).

The Mitochondrial intermembrane portion of the chain corresponds to 1 to 10 (MSIMDHSPTT). A helical transmembrane segment spans residues 11 to 31 (GVVTVIVILIAIAALGALILG). The Cytoplasmic segment spans residues 32–88 (CWCYLRLQRISQSEDEESIVGDGETKEPFLLVQYSAKGPCVERKAKLMTPNGPEVHG). Ser49 carries the post-translational modification Phosphoserine.

This sequence belongs to the stannin family. As to quaternary structure, monomer.

Its subcellular location is the mitochondrion outer membrane. In terms of biological role, plays a role in the toxic effects of organotins. Plays a role in endosomal maturation. This chain is Stannin (SNN), found in Homo sapiens (Human).